Reading from the N-terminus, the 1096-residue chain is Mediator of replication checkpoint protein 1 (1096 aa).

Residues 68–85 show a composition bias toward basic and acidic residues; sequence EGKKAPEQNHNNGKDRSE. The segment at 68 to 90 is disordered; that stretch reads EGKKAPEQNHNNGKDRSENSLPT. Position 144 is a phosphoserine (serine 144). Disordered stretches follow at residues 166–200, 294–316, and 336–365; these read ALKTPLTTGRPGATQRIDSSGATSQTQPIKSIEPQ, IQSELASEDSKREKARNVEYKKP, and DDSSSNEDDDIKLENAHPKPVQNDDELHEN. Residues 181–200 are compositionally biased toward polar residues; it reads RIDSSGATSQTQPIKSIEPQ. Over residues 294 to 315 the composition is skewed to basic and acidic residues; that stretch reads IQSELASEDSKREKARNVEYKK. Positions 336–346 are enriched in acidic residues; the sequence is DDSSSNEDDDI. Residues serine 409, serine 411, and serine 434 each carry the phosphoserine modification. A coiled-coil region spans residues 488 to 542; sequence QKEVIETKGLKLEDMAKEKEIVENLLEQEILRNKRIRQKEKRREKLEENDFQLNA. Positions 527 to 620 are disordered; the sequence is EKRREKLEEN…VEAKPKEKAD (94 aa). Positions 547–560 are enriched in low complexity; sequence SDSGSESSGFALSG. Residues 591–600 show a composition bias toward basic residues; that stretch reads KQKKSHHVKH. A phosphoserine mark is found at serine 605 and serine 607. Threonine 609 is subject to Phosphothreonine. The span at 611-620 shows a compositional bias: basic and acidic residues; it reads VEAKPKEKAD. A coiled-coil region spans residues 652–716; the sequence is DTQNIEEVMA…IKELKKRGVT (65 aa). The segment at 724–743 is disordered; sequence EESEDEWHGIGGADGEGSDD. Phosphoserine occurs at positions 801 and 807. A compositionally biased stretch (polar residues) spans 881–898; the sequence is DTQDNSINVGDNTGNNEQ. The disordered stretch occupies residues 881-903; sequence DTQDNSINVGDNTGNNEQKPVDQ. Phosphoserine is present on serine 911. Positions 1058 to 1096 are disordered; it reads RKTEGSHRYHHDHHNKKMKMKTKTKSNKLFESGQDSFDN. The segment covering 1065–1083 has biased composition (basic residues); sequence RYHHDHHNKKMKMKTKTKS.

Interacts with CDC45 in S phase. Post-translationally, phosphorylated by MEC1 and RAD53.

The protein localises to the nucleus. In terms of biological role, required for normal DNA replication. Phosphorylated in response to DNA replication stress. Phosphorylation allows it to mediate the activation of RAD53. The polypeptide is Mediator of replication checkpoint protein 1 (MRC1) (Saccharomyces cerevisiae (strain ATCC 204508 / S288c) (Baker's yeast)).